The primary structure comprises 1010 residues: Polyhomeotic-like protein 1 (1010 aa).

Positions 1 to 22 (METESEQNSSSTNGSSSSGASS) are enriched in low complexity. Disordered regions lie at residues 1–25 (METESEQNSSSTNGSSSSGASSRPQ), 212–243 (NQQASAQGPQMPGSTQKAIPPGASPVSGLSQT), 259–312 (GQSL…TGVV), 444–506 (QQQG…SKPP), 565–588 (GAVQPGQAHLASSPPSSQAAPGAL), and 646–678 (KRKAESEEERDDLSALASVLPTKASPAAESPKV). Positions 212-228 (NQQASAQGPQMPGSTQK) are enriched in polar residues. Gly residues predominate over residues 279–292 (MGPGGGGQAPGGLG). A compositionally biased stretch (pro residues) spans 453–463 (PQPPQVPPTQQ). Residues 464 to 480 (VPPSQSQQQAQTLVVQP) show a composition bias toward low complexity. Over residues 488-500 (TLPPEPTSKPPIP) the composition is skewed to pro residues. The segment covering 575 to 587 (ASSPPSSQAAPGA) has biased composition (low complexity). Serine 651 is subject to Phosphoserine. A Glycyl lysine isopeptide (Lys-Gly) (interchain with G-Cter in SUMO2) cross-link involves residue lysine 769. Residues 772–794 (QAGLPTGLNESQPSGPLGGDSPS) form a disordered region. The segment at 797–831 (LEKKANLLKCEYCGKYAPAEQFRGSKRFCSMTCAK) adopts an FCS-type zinc-finger fold. 4 residues coordinate Zn(2+): cysteine 806, cysteine 809, cysteine 825, and cysteine 829. The disordered stretch occupies residues 854–928 (ASYARVRRRG…LGNTITTPST (75 aa)). Serine 904 is subject to Phosphoserine. Phosphothreonine is present on threonine 928. Residues 946–1010 (WSVEEVYEFI…CAKINVLKET (65 aa)) form the SAM domain.

As to quaternary structure, homodimer. Component of a PRC1-like complex. Interacts with the SAM domain of SCMH1 via its SAM domain in vitro. Interacts with RNF2 and CBX7. Interacts with PHC2. Interacts with BMI1. As to expression, highly expressed in testis with lower levels in most other tissues. Expressed in embryonic stem cells.

It localises to the nucleus. In terms of biological role, component of a Polycomb group (PcG) multiprotein PRC1-like complex, a complex class required to maintain the transcriptionally repressive state of many genes, including Hox genes, throughout development. PcG PRC1 complex acts via chromatin remodeling and modification of histones; it mediates monoubiquitination of histone H2A 'Lys-119', rendering chromatin heritably changed in its expressibility. Required for proper control of cellular levels of GMNN expression. This is Polyhomeotic-like protein 1 from Mus musculus (Mouse).